The following is a 347-amino-acid chain: GMP reductase (347 aa).

108-131 (TDFIKLSEILAKSEDLNFICIDIA) serves as a coordination point for NADP(+). Residues G181 and G183 each contribute to the K(+) site. C186 functions as the Thioimidate intermediate in the catalytic mechanism. 216 to 239 (IIGDGGCSCAGDVAKAFGGGADFV) is a binding site for NADP(+).

Belongs to the IMPDH/GMPR family. GuaC type 1 subfamily. As to quaternary structure, homotetramer.

The enzyme catalyses IMP + NH4(+) + NADP(+) = GMP + NADPH + 2 H(+). Functionally, catalyzes the irreversible NADPH-dependent deamination of GMP to IMP. It functions in the conversion of nucleobase, nucleoside and nucleotide derivatives of G to A nucleotides, and in maintaining the intracellular balance of A and G nucleotides. This is GMP reductase from Shewanella pealeana (strain ATCC 700345 / ANG-SQ1).